A 197-amino-acid chain; its full sequence is Class A basic helix-loop-helix protein 15 (197 aa).

Residues 1–12 (MKTKNRPPRRRT) are compositionally biased toward basic residues. Disordered stretches follow at residues 1-82 (MKTK…ERER) and 178-197 (QPQG…REGS). Residues T12 and T25 each carry the phosphothreonine modification. Residues 65 to 82 (GRRENSVQRRLESNERER) show a composition bias toward basic and acidic residues. The bHLH domain maps to 72–124 (QRRLESNERERQRMHKLNNAFQALREVIPHVRADKKLSKIETLTLAKNYIKSL).

Forms homodimers or heterodimers with TCF3 gene products E12 and E47. These dimers bind to the E-box site, however, heterodimer with MYOD1 does not bind target DNA. As to expression, expressed in pancreatic tissue only in acinar cells. There is a complete absence of expression in intra- or interlobular pancreatic ducts and in all islet cells.

Its subcellular location is the nucleus. Its function is as follows. Plays a role in controlling the transcriptional activity of MyoD, ensuring that expanding myoblast populations remain undifferentiated. Repression may occur through muscle-specific E-box occupancy by homodimers. May also negatively regulate bHLH-mediated transcription through an N-terminal repressor domain. Serves as a key regulator of acinar cell function, stability, and identity. Also required for normal organelle localization in exocrine cells and for mitochondrial calcium ion transport. May function as a unique regulator of gene expression in several different embryonic and postnatal cell lineages. Binds to the E-box consensus sequence 5'-CANNTG-3'. The protein is Class A basic helix-loop-helix protein 15 (Bhlha15) of Mus musculus (Mouse).